A 215-amino-acid polypeptide reads, in one-letter code: UPF0323 lipoprotein jhp_0217 (215 aa).

A signal peptide spans 1–27; the sequence is MKKPYRKISDYAIVGGLSALVMVSIVG. Cys28 is lipidated: N-palmitoyl cysteine. Cys28 carries the S-diacylglycerol cysteine lipid modification. Polar residues predominate over residues 158–169; sequence QRTYKSPQAYQR. The disordered stretch occupies residues 158–215; sequence QRTYKSPQAYQRSQNSFSKSAPSASSMGTASKGQSGFFGSSRPTSSPAISSGTRGFNA. The span at 170-183 shows a compositional bias: low complexity; it reads SQNSFSKSAPSASS. Positions 184–195 are enriched in polar residues; sequence MGTASKGQSGFF. The segment covering 197-208 has biased composition (low complexity); sequence SSRPTSSPAISS.

The protein belongs to the UPF0323 family.

It localises to the cell membrane. In Helicobacter pylori (strain J99 / ATCC 700824) (Campylobacter pylori J99), this protein is UPF0323 lipoprotein jhp_0217.